Here is a 65-residue protein sequence, read N- to C-terminus: Large ribosomal subunit protein bL35 (65 aa).

Basic residues predominate over residues 1–26; that stretch reads MPKIKTHRGAAKRFSKTGTGKIKRSH. The tract at residues 1-41 is disordered; that stretch reads MPKIKTHRGAAKRFSKTGTGKIKRSHAFTSHILTSKTRKNK.

The protein belongs to the bacterial ribosomal protein bL35 family.

The chain is Large ribosomal subunit protein bL35 from Geotalea daltonii (strain DSM 22248 / JCM 15807 / FRC-32) (Geobacter daltonii).